Reading from the N-terminus, the 203-residue chain is Short chain dehydrogenase/reductase dpmpH (203 aa).

The NADP(+) site is built by aspartate 23, tyrosine 77, and lysine 81. The active-site Proton acceptor is tyrosine 77. Lysine 81 serves as the catalytic Lowers pKa of active site Tyr.

This sequence belongs to the short-chain dehydrogenases/reductases (SDR) family.

It participates in secondary metabolite biosynthesis; terpenoid biosynthesis. In terms of biological role, short chain dehydrogenase/reductase; part of the gene cluster that mediates the biosynthesis of diterpenoid pyrones. The first step of the pathway is the synthesis of the alpha-pyrone moiety by the polyketide synthase dpmpA via condensation of one acetyl-CoA starter unit with 3 malonyl-CoA units and 2 methylations. The alpha-pyrone is then combined with geranylgeranyl pyrophosphate (GGPP) formed by the GGPP synthase dpmpD through the action of the prenyltransferase dpmpC to yield a linear alpha-pyrone diterpenoid. Subsequent steps in the diterpenoid pyrone biosynthetic pathway involve the decalin core formation, which is initiated by the epoxidation of the C10-C11 olefin by the FAD-dependent oxidoreductase dpmpE, and is followed by a cyclization cascade catalyzed by the terpene cyclase dpmpB. The short chain dehydrogenase/reductase dpmpG then oxidizes the 8S hydroxy group to a ketone and the short chain dehydrogenase/reductase dpmpH reduces the ketone to the 8R hydroxy group to yield higginsianin B. Higginsianin B is further methylated by the methyltransferase dpmpI to produce the intermediate named FDDP B. The cytochrome P450 monooxygenase dpmpJ then oxidizes the C-26 methyl to primary alcohol, producing the final diterpenoid pyrone with a C-26 primary alcohol on the gamma-pyrone moiety named FDDP C. The chain is Short chain dehydrogenase/reductase dpmpH from Macrophomina phaseolina (strain MS6) (Charcoal rot fungus).